The following is a 205-amino-acid chain: Large ribosomal subunit protein uL3 (205 aa).

This sequence belongs to the universal ribosomal protein uL3 family. In terms of assembly, part of the 50S ribosomal subunit. Forms a cluster with proteins L14 and L19.

One of the primary rRNA binding proteins, it binds directly near the 3'-end of the 23S rRNA, where it nucleates assembly of the 50S subunit. The sequence is that of Large ribosomal subunit protein uL3 from Thermosipho africanus (strain TCF52B).